The following is a 227-amino-acid chain: 7-cyano-7-deazaguanine synthase (227 aa).

10 to 20 contacts ATP; the sequence is LSGGLDSCVAT. 4 residues coordinate Zn(2+): Cys193, Cys201, Cys204, and Cys207.

It belongs to the QueC family. Requires Zn(2+) as cofactor.

The catalysed reaction is 7-carboxy-7-deazaguanine + NH4(+) + ATP = 7-cyano-7-deazaguanine + ADP + phosphate + H2O + H(+). It functions in the pathway purine metabolism; 7-cyano-7-deazaguanine biosynthesis. In terms of biological role, catalyzes the ATP-dependent conversion of 7-carboxy-7-deazaguanine (CDG) to 7-cyano-7-deazaguanine (preQ(0)). The chain is 7-cyano-7-deazaguanine synthase from Methanobrevibacter smithii (strain ATCC 35061 / DSM 861 / OCM 144 / PS).